The primary structure comprises 862 residues: Fork head protein homolog 2 (862 aa).

The region spanning 83 to 152 is the FHA domain; sequence VSIGRNTDPL…NGAKVNFQRT (70 aa). A DNA-binding region (fork-head) is located at residues 339-430; that stretch reads VKPPHSYATM…QQEFLNKWNT (92 aa). 4 disordered regions span residues 498–528, 611–663, 698–730, and 750–846; these read PSKGNLPASQQSQPPVSHQNQSQQPPPQEQR, SDSA…GTTT, PERGSANRARSPLHSNSNNTNNNGANNSNLQTS, and ESNN…ANAK. The segment covering 504–520 has biased composition (low complexity); sequence PASQQSQPPVSHQNQSQ. Over residues 611 to 644 the composition is skewed to polar residues; the sequence is SDSADKSTNNNGGTKMNLPAISTSSLDENGNLEP. A compositionally biased stretch (low complexity) spans 645–655; it reads TTTTSSGNSNS. A Phosphoserine modification is found at Ser708. Residues 712–726 show a composition bias toward low complexity; sequence SNSNNTNNNGANNSN. 2 stretches are compositionally biased toward polar residues: residues 750-770 and 778-788; these read ESNNDNRRLTPSTSKSQNVKS and LQFSSTNNTPA. The segment covering 804–829 has biased composition (basic and acidic residues); sequence IKAKENENATSEKDSDSNSNDLETKD. Polar residues predominate over residues 830 to 844; sequence INSSPLKNQGGSTAN. Phosphoserine occurs at positions 832 and 833.

Interacts with MCM1. Interacts with NDD1. Interacts with the origin recognition complex (ORC) composed of ORC1 to ORC6.

The protein localises to the nucleus. It localises to the cytoplasm. Its subcellular location is the cytosol. Transcription factor that regulates the expression of the CLB2 cluster of genes during the G2/M phase of the mitotic cell cycle. The CLB2 cluster of genes includes mitotic regulators such as CLB1, CLB2, CDC5 and CDC20 as well as SWI5 and ACE2, transcription factors required for the subsequent temporal wave of cell cycle regulated gene expression in the M/G1 phase interval. Involved in HMRa silencing. FKH1 and FKH2 associate with the coding regions of active genes and influence, in opposing ways, transcriptional elongation and termination, and coordinate early transcription elongation and pre-mRNA processing. Both FKH1 and FKH2 play a role as regulators of lifespan in collaboration with the anaphase-promoting complex (APC), likely through combined regulation of stress response, genomic stability, and cell cycle regulation. FKH1 and FKH2 function also in controlling yeast cell morphology by preventing preudohyphal growth. Acts as a rate-limiting replication origin activator via its interaction with the origin recognition complex (ORC). This is Fork head protein homolog 2 from Saccharomyces cerevisiae (strain ATCC 204508 / S288c) (Baker's yeast).